The sequence spans 163 residues: Single-stranded DNA-binding protein 2 (163 aa).

Positions 1-104 (MINNVVLVGR…VVADNFQMLE (104 aa)) constitute an SSB domain. Residues 109 to 163 (REGGSTGSFNGGFNNNTSSSNSYSAPAQQTPNFGRDDSPFGNSNPMDISDDDLPF) form a disordered region. Residues 119 to 130 (GGFNNNTSSSNS) show a composition bias toward low complexity. Residues 131-140 (YSAPAQQTPN) are compositionally biased toward polar residues. The Important for interaction with partner proteins signature appears at 158–163 (DDDLPF).

As to quaternary structure, homotetramer.

In terms of biological role, plays an important role in DNA replication, recombination and repair. Binds to ssDNA and to an array of partner proteins to recruit them to their sites of action during DNA metabolism. The chain is Single-stranded DNA-binding protein 2 (ssb2) from Streptococcus pyogenes serotype M18 (strain MGAS8232).